We begin with the raw amino-acid sequence, 1202 residues long: Nitric oxide synthase 3 (1202 aa).

The disordered stretch occupies residues 1 to 70 (MGNLKSVGQE…PPDGPKFPRV (70 aa)). Gly2 carries N-myristoyl glycine lipidation. S-palmitoyl cysteine attachment occurs at residues Cys15 and Cys26. The segment covering 15-27 (CGLGLGLGLGLCG) has biased composition (gly residues). The span at 33–65 (SPAPEPSQAPVPPSPTRPAPDHSPPLTRPPDGP) shows a compositional bias: pro residues. Zn(2+) is bound by residues Cys93 and Cys98. Residues 97–485 (RCLGSLVFPR…PDPWKGSAAK (389 aa)) are interaction with NOSIP. Residue Ser101 participates in (6R)-L-erythro-5,6,7,8-tetrahydrobiopterin binding. Heme b is bound at residue Cys183. Residues Gln246, Trp355, Tyr356, and Glu360 each contribute to the L-arginine site. (6R)-L-erythro-5,6,7,8-tetrahydrobiopterin is bound by residues Ala445, Trp446, and Phe459. Heme b is bound at residue Tyr474. Residues 489–509 (ITRKKTFKEVANAVKISASLM) form a calmodulin-binding region. Thr494 carries the phosphothreonine; by AMPK modification. The 184-residue stretch at 519-702 (ATILYGSETG…AFRGWAQAAF (184 aa)) folds into the Flavodoxin-like domain. Residues Ser525, Glu526, Thr527, Arg529, Ser571, and Thr572 each coordinate FMN. Ser614, Ser632, and Ser637 each carry phosphoserine. Residues Ser653, Cys660, Glu686, and Gln690 each contribute to the FMN site. Positions 755-1001 (RKMFQATILS…IRGAPSFRLP (247 aa)) constitute an FAD-binding FR-type domain. Arg775 contacts NADP(+). His797 is an FAD binding site. Residues 817–843 (EDPPPSTEPVAVEQLEKGSPGGPPPGW) form a disordered region. A Phosphoserine modification is found at Ser835. 9 residues coordinate FAD: Arg937, Tyr939, Ser940, Thr955, Ala957, Tyr961, Val974, Cys975, and Ser976. NADP(+)-binding residues include Thr1015, Arg1048, Ser1077, Arg1078, Lys1084, Tyr1086, and Gln1088. Phosphothreonine is present on Thr1174. Residue Ser1176 is modified to Phosphoserine; by AMPK. At Ser1178 the chain carries Phosphoserine.

Belongs to the NOS family. As to quaternary structure, homodimer. Interacts with NOSIP and NOSTRIN. Interacts with HSP90AB1. Forms a complex with ASL, ASS1 and SLC7A1; the complex regulates cell-autonomous L-arginine synthesis and citrulline recycling while channeling extracellular L-arginine to nitric oxide synthesis pathway. Heme b serves as cofactor. The cofactor is FAD. FMN is required as a cofactor. Requires (6R)-L-erythro-5,6,7,8-tetrahydrobiopterin as cofactor. Phosphorylation by AMPK at Ser-1176 in the presence of Ca(2+)-calmodulin (CaM) activates activity. In absence of Ca(2+)-calmodulin, AMPK also phosphorylates Thr-494, resulting in inhibition of activity. In terms of tissue distribution, expressed constitutively by vascular endothelium. Detected in alveolar and serosal epithelial cells as well as in endothelial cells in one day old rat. In adult lung, detected in rare endothelial cells.

Its subcellular location is the membrane. It localises to the caveola. It is found in the cytoplasm. The protein resides in the cytoskeleton. The protein localises to the golgi apparatus. Its subcellular location is the cell membrane. The catalysed reaction is 2 L-arginine + 3 NADPH + 4 O2 + H(+) = 2 L-citrulline + 2 nitric oxide + 3 NADP(+) + 4 H2O. Stimulated by calcium/calmodulin. Inhibited by NOSIP and NOSTRIN. Its function is as follows. Produces nitric oxide (NO) which is implicated in vascular smooth muscle relaxation through a cGMP-mediated signal transduction pathway. NO mediates vascular endothelial growth factor (VEGF)-induced angiogenesis in coronary vessels and promotes blood clotting through the activation of platelets. This is Nitric oxide synthase 3 from Rattus norvegicus (Rat).